The chain runs to 290 residues: UPF0761 membrane protein CKO_03126 (290 aa).

Helical transmembrane passes span 44–64 (LLSL…FPMF), 104–124 (VGAC…DSAL), 140–160 (FAVY…SLAI), 183–203 (VFPL…VPTT), 210–230 (AVVG…GFAL), and 244–264 (VLAV…IVLL).

This sequence belongs to the UPF0761 family.

Its subcellular location is the cell inner membrane. This chain is UPF0761 membrane protein CKO_03126, found in Citrobacter koseri (strain ATCC BAA-895 / CDC 4225-83 / SGSC4696).